The primary structure comprises 381 residues: Neuropeptide Y receptor type 2 (381 aa).

The disordered stretch occupies residues 1 to 35 (MGPIGTEADENQTVEEMKVEQYGPQTTPRGELVPD). Over 1 to 51 (MGPIGTEADENQTVEEMKVEQYGPQTTPRGELVPDPEPELIDSTKLIEVQV) the chain is Extracellular. N-linked (GlcNAc...) asparagine glycosylation occurs at N11. A helical transmembrane segment spans residues 52 to 72 (VLILAYCSIILLGVIGNSLVI). Topologically, residues 73-86 (HVVIKFKSMRTVTN) are cytoplasmic. A helical transmembrane segment spans residues 87-107 (FFIANLAVADLVVNTLCLPFT). Over 108 to 124 (LTYTLMGEWKMGPVLCH) the chain is Extracellular. C123 and C203 form a disulfide bridge. The chain crosses the membrane as a helical span at residues 125-145 (LVPYAQGLAVQVSTITLTVIA). Topologically, residues 146 to 165 (LDRHRCIVYHLESKISKRIS) are cytoplasmic. Residues 166-186 (FLIIGLAWGISALLASPLAIF) traverse the membrane as a helical segment. Residues 187-216 (REYSLIEIIPDFEIVACTEKWPGEEKSIYG) are Extracellular-facing. The chain crosses the membrane as a helical span at residues 217 to 237 (TVYSLSSLLILYVLPLGIISF). Topologically, residues 238 to 268 (SYTRIWSKLKSHVSPGAANDHYHQRRQKTTK) are cytoplasmic. The helical transmembrane segment at 269–289 (MLVCVVVVFAVSWLPLHAFQL) threads the bilayer. Over 290–304 (AVDIDSHVLDLKEYK) the chain is Extracellular. Residues 305 to 325 (LIFTVFHIIAMCSTFANPLLY) form a helical membrane-spanning segment. At 326–381 (GWMNSNYRKAFLSAFRCEQRLDAIHSEVSVTFKAKKNLEVRKNSGPNDSFTEATNV) the chain is on the cytoplasmic side. Residue C342 is the site of S-palmitoyl cysteine attachment.

This sequence belongs to the G-protein coupled receptor 1 family.

The protein localises to the cell membrane. Its function is as follows. Receptor for neuropeptide Y and peptide YY. This Macaca mulatta (Rhesus macaque) protein is Neuropeptide Y receptor type 2 (NPY2R).